A 213-amino-acid chain; its full sequence is uncharacterized protein (213 aa).

This is an uncharacterized protein from Escherichia coli (strain K12).